Here is a 546-residue protein sequence, read N- to C-terminus: 2-isopropylmalate synthase (546 aa).

Residues 8 to 271 enclose the Pyruvate carboxyltransferase domain; sequence ILIFDTTLRD…NSFFKRNPDS (264 aa). 4 residues coordinate Mn(2+): aspartate 17, histidine 208, histidine 210, and asparagine 244. Positions 408–546 are regulatory domain; that stretch reads QLSLVQVSCG…TNTFLSNNAN (139 aa).

This sequence belongs to the alpha-IPM synthase/homocitrate synthase family. LeuA type 1 subfamily. Homodimer. Mn(2+) is required as a cofactor.

The protein localises to the cytoplasm. The catalysed reaction is 3-methyl-2-oxobutanoate + acetyl-CoA + H2O = (2S)-2-isopropylmalate + CoA + H(+). It participates in amino-acid biosynthesis; L-leucine biosynthesis; L-leucine from 3-methyl-2-oxobutanoate: step 1/4. Catalyzes the condensation of the acetyl group of acetyl-CoA with 3-methyl-2-oxobutanoate (2-ketoisovalerate) to form 3-carboxy-3-hydroxy-4-methylpentanoate (2-isopropylmalate). This Prochlorococcus marinus (strain AS9601) protein is 2-isopropylmalate synthase.